The chain runs to 172 residues: uncharacterized protein (172 aa).

4 helical membrane passes run 1-21, 41-61, 72-92, and 136-156; these read MLFI…SLSI, NSTL…IEAN, QIGL…IYEL, and FCQA…ILAV.

Its subcellular location is the cell membrane. This is an uncharacterized protein from Haemophilus influenzae (strain ATCC 51907 / DSM 11121 / KW20 / Rd).